Consider the following 633-residue polypeptide: MLDFLELEETVGRAWHRLIGKTGSWPQYPDHAVQLVDIRQRLAICFRGFGGDIAVQIAPARARTSTHRLGLRQRMALGEEKLAQPLRDEATLMLPPEIALFPDRQLNYDLYVWLVGYMAVMPMDADALPEDALRRDLAALQIAEQTVERACRAFPGLKPRYKRLCAAILAERPKRPLHRLEQQVEARILSLLKQGADLPDDALPTIFPHRGPAGYLPALPVPLWPGLMKREEVAPRTGEDEPVRNSQSEGAETGRQIAQRERQDPRHADRSPFILNRFEKILAMAEMVSVDRPSDDSDEQNAKSADELDDLTLGERKGRPAARFRFDLDLPPEAVDRSLLTAELTYPEWDYRKGAYLPDHCAVLAAPVQEKEKPLELDAAAQSLVRRVRRQFEILRPGREVLRAQLDGTDLDLDAVVRSRCDLAAGGQGSDRVHLMSRPQANDLAVTLLVDVSLSTDAWVDNRRVLDVEKEALLVLANGIAACGDRCSILTFTSRRRSWVRVETVKDFDESFGPTVEHRIAALKPGFYTRMGAAMRHATAKLAEQPNRKKLLLLLTDGKPNDVDHYEGRFALEDSRRAAGEVRAKGVNVFAVTVDREASAYLPALFGRGGYALVANLAKLPVAMPAIYRMLAG.

Basic and acidic residues-rich tracts occupy residues 232 to 243, 258 to 270, and 292 to 306; these read EVAPRTGEDEPV, AQRE…HADR, and RPSD…KSAD. 2 disordered regions span residues 232–270 and 290–314; these read EVAP…HADR and VDRP…LTLG. The VWFA domain maps to 445-633; that stretch reads AVTLLVDVSL…MPAIYRMLAG (189 aa).

In terms of biological role, part of the operon norEFCBQD encoding nitric oxide reductase. Essential virulence factor, probably involved in the detoxification of nitric oxide (NO) produced in the macrophages during the innate response against infection. In Brucella abortus (strain 2308), this protein is Protein NorD (norD).